We begin with the raw amino-acid sequence, 695 residues long: MFLKKLLKGSSNSTRPRGATFNGIYTGGDNLSGSSEQNYNNSLTTSTKQTNRQTLLLKSMEYINGSSTYYGNYMDYFDIPVQLFVGGEQSEIYPMLSYNQSLKSLILDFNKITEIPDCITLLPNLNHLSLAANQLTHVPEFLSQLKSLETFEIGINQFTCFPLNVCKIKSLTSLHLETNNIKSLPEEFLNLVNLKDLSLFDNQLKEIPDSLPNNIEKLNLGCNDISSSKSDSLIRISHSLTTLNLSENKIEELDESLSCLVNVKTLMLDCNMIKVIPGSVLGSWKSLVTLNLPHNLISDLPPEVILLSNLRIIDLRGNNFENCKKLIPTESSTPISFKIEDFIQNKERINSLKFDNIEILPTTNSIINSNNNNYEVITTTATTKNIIENKEDNDEKLLNNSTISIVLDSNNKSENNEINENNQLLTTDDDYNTDKNDSFTESEDIIKKIQIELDSIEIQQKQLLLKQIKLKEKMKKEKNKLFKFQQQEIIHQEQLPQSKPENEKLTNIPEQQQKQQQQQQQQEVQQPIITLTKSTSSKVEVEMIVPNQLIFWQSIVPDLIIDKLYLGCRECAMNKSWLKDNNVTHILTVANFKPLYPDLFKYLIINIEDVDEANIYQHFKEMNAFIDEGREKGGVLIHCRAGVSRSASATMAFIMMKNSLKFQEAFDITIKGRPRIYPNIGFINQLKKFEKDLFK.

LRR repeat units lie at residues 101-122 (SLKS…ITLL), 124-145 (NLNH…LSQL), 147-167 (SLET…NVCK), 170-191 (SLTS…FLNL), 193-214 (NLKD…LPNN), 215-235 (IEKL…SLIR), 239-260 (SLTT…LSCL), 262-283 (NVKT…VLGS), 286-307 (SLVT…VILL), and 309-330 (NLRI…IPTE). Residues 413–426 (SENNEINENNQLLT) show a composition bias toward low complexity. Disordered regions lie at residues 413–438 (SENN…KNDS) and 492–519 (QEQL…QQQQ). The Tyrosine-protein phosphatase domain maps to 556 to 695 (VPDLIIDKLY…LKKFEKDLFK (140 aa)). The active-site Phosphocysteine intermediate is Cys-639.

This sequence belongs to the protein-tyrosine phosphatase family. Non-receptor class dual specificity subfamily.

The enzyme catalyses O-phospho-L-tyrosyl-[protein] + H2O = L-tyrosyl-[protein] + phosphate. It catalyses the reaction O-phospho-L-seryl-[protein] + H2O = L-seryl-[protein] + phosphate. It carries out the reaction O-phospho-L-threonyl-[protein] + H2O = L-threonyl-[protein] + phosphate. Its function is as follows. Probable phosphatase with dual specificity toward Ser/Thr and Tyr-containing proteins. The protein is MAP kinase phosphatase with leucine-rich repeats protein 2 (mpl2) of Dictyostelium discoideum (Social amoeba).